The primary structure comprises 140 residues: Putative septation protein SpoVG (140 aa).

Residues 88–127 are disordered; sequence VAPQAGGLQGAEEPTAVEPAPQLQDESELPWEPGDDGEGA. Positions 112 to 124 are enriched in acidic residues; that stretch reads DESELPWEPGDDG.

It belongs to the SpoVG family.

Could be involved in septation. This is Putative septation protein SpoVG from Symbiobacterium thermophilum (strain DSM 24528 / JCM 14929 / IAM 14863 / T).